Consider the following 447-residue polypeptide: MLLDAGPQYPAIGVTTFGASRHHSAGDVAERDVGLGINPFADGMGAFKLNPSSHELASAGQTAFTSQAPGYAAAAALGHHHHPGHVGSYSSAAFNSTRDFLFRNRGFGDAAAAASAQHSLFAASAGGFGGPHGHTDAAGHLLFSGLHEQAAGHASPNVVNGQMRLGFSGDMYPRPEQYGQVTSPRSEHYAAPQLHGYGPMNVNMAAHHGAGAFFRYMRQPIKQELICKWIEPEQLANPKKSCNKTFSTMHELVTHVTVEHVGGPEQSNHICFWEECPREGKPFKAKYKLVNHIRVHTGEKPFPCPFPGCGKVFARSENLKIHKRTHTGEKPFKCEFEGCDRRFANSSDRKKHMHVHTSDKPYLCKMCDKSYTHPSSLRKHMKVHESSSQGSQPSPAASSGYESSTPPTIVSPTTDNPTTSSMSPSSSAVHHTAGHSALSSNFNEWYV.

The C2H2-type 1; atypical zinc-finger motif lies at 225 to 260 (LICKWIEPEQLANPKKSCNKTFSTMHELVTHVTVEH). The segment at 269–296 (HICFWEECPREGKPFKAKYKLVNHIRVH) adopts a C2H2-type 2; atypical zinc-finger fold. 3 C2H2-type zinc fingers span residues 302–326 (FPCP…KRTH), 332–356 (FKCE…MHVH), and 362–384 (YLCK…MKVH). Positions 375 to 434 (SSLRKHMKVHESSSQGSQPSPAASSGYESSTPPTIVSPTTDNPTTSSMSPSSSAVHHTAG) are disordered. Over residues 386–427 (SSSQGSQPSPAASSGYESSTPPTIVSPTTDNPTTSSMSPSSS) the composition is skewed to low complexity.

This sequence belongs to the GLI C2H2-type zinc-finger protein family. Interacts (via the C2H2-type domains 3, 4 and 5) with MDFIC (via the C2H2-type domains 3, 4 and 5). Interacts with GLI1; the interaction enhances transcription activation. Interacts with GLI2. Interacts with GLI3; the interaction enhances transcription activation. Expressed in osteoblasts (at protein level). Expressed in the CNS. A high level expression is seen in the cerebellum, while a low level expression is seen in the olfactory bulb, diencephalon, and brainstem. Expressed in lumbar spine and iliac crest.

Its subcellular location is the nucleus. The protein resides in the cytoplasm. In terms of biological role, acts as a transcriptional activator. Involved in neurogenesis. Plays important roles in the early stage of organogenesis of the CNS, as well as during dorsal spinal cord development and maturation of the cerebellum. Involved in the spatial distribution of mossy fiber (MF) neurons within the pontine gray nucleus (PGN). Plays a role in the regulation of MF axon pathway choice. Promotes MF migration towards ipsilaterally-located cerebellar territories. May have a role in shear flow mechanotransduction in osteocytes. Retains nuclear GLI1 and GLI3 in the cytoplasm. Binds to the minimal GLI-consensus sequence 5'-TGGGTGGTC-3'. The polypeptide is Zinc finger protein ZIC 1 (Zic1) (Mus musculus (Mouse)).